The chain runs to 204 residues: dITP/XTP pyrophosphatase (204 aa).

7–12 provides a ligand contact to substrate; it reads TNNKDK. Residues Asp38 and Asp74 each contribute to the Mg(2+) site. Catalysis depends on Asp74, which acts as the Proton acceptor. Residues Ser75, 156-159, Lys179, and 184-185 each bind substrate; these read FGYD and HR.

It belongs to the HAM1 NTPase family. As to quaternary structure, homodimer. Mg(2+) is required as a cofactor.

It carries out the reaction XTP + H2O = XMP + diphosphate + H(+). The catalysed reaction is dITP + H2O = dIMP + diphosphate + H(+). It catalyses the reaction ITP + H2O = IMP + diphosphate + H(+). In terms of biological role, pyrophosphatase that catalyzes the hydrolysis of nucleoside triphosphates to their monophosphate derivatives, with a high preference for the non-canonical purine nucleotides XTP (xanthosine triphosphate), dITP (deoxyinosine triphosphate) and ITP. Seems to function as a house-cleaning enzyme that removes non-canonical purine nucleotides from the nucleotide pool, thus preventing their incorporation into DNA/RNA and avoiding chromosomal lesions. The sequence is that of dITP/XTP pyrophosphatase from Campylobacter fetus subsp. fetus (strain 82-40).